The following is a 67-amino-acid chain: Conotoxin Cl14.2b (67 aa).

The signal sequence occupies residues 1–20 (MNVTVMFLVLLLLTMPLTDG). Residues 21–48 (FNIRATNGGELFGPVQRDAGNVLDHGFQ) constitute a propeptide that is removed on maturation.

It belongs to the conotoxin L superfamily. Post-translationally, contains 2 disulfide bonds. In terms of tissue distribution, expressed by the venom duct.

The protein localises to the secreted. Functionally, increases calcium current amplitude through Cav1.2/Cav1.3 channels in rat pancreatic beta-cells, which is a prerequisite for eliciting insulin secretion. Stimulates insulin secretion in NIT-1 insulinoma cell lines. In vivo, significantly decreases mice blood glucose levels as of 45 minutes after treatment, similarly to insulin treatment. Has a potential therapeutic use in endocrinal pathologies such as early stages of type 2 diabetes where the pancreas's capability to produce insulin is still effective. The polypeptide is Conotoxin Cl14.2b (Californiconus californicus (California cone)).